We begin with the raw amino-acid sequence, 233 residues long: Probable RNA 2'-phosphotransferase (233 aa).

The protein belongs to the KptA/TPT1 family.

Its function is as follows. Removes the 2'-phosphate from RNA via an intermediate in which the phosphate is ADP-ribosylated by NAD followed by a presumed transesterification to release the RNA and generate ADP-ribose 1''-2''-cyclic phosphate (APPR&gt;P). May function as an ADP-ribosylase. This chain is Probable RNA 2'-phosphotransferase, found in Hyperthermus butylicus (strain DSM 5456 / JCM 9403 / PLM1-5).